A 74-amino-acid chain; its full sequence is U19-theraphotoxin-Cg1a (74 aa).

A signal peptide spans 1–7 (IMFVWAS). Residues 8–36 (AAEVEERGSDQRDSPASLKSMETIFQSEQ) constitute a propeptide that is removed on maturation. 3 disulfides stabilise this stretch: cysteine 39-cysteine 53, cysteine 46-cysteine 58, and cysteine 52-cysteine 66.

It belongs to the neurotoxin 10 (Hwtx-1) family. 38 (Jztx-33) subfamily. As to expression, expressed by the venom gland.

It localises to the secreted. Its function is as follows. Probable ion channel inhibitor. The chain is U19-theraphotoxin-Cg1a from Chilobrachys guangxiensis (Chinese earth tiger tarantula).